The sequence spans 297 residues: Protease HtpX homolog (297 aa).

Helical transmembrane passes span 14 to 34 (IVLLFVFFILVALVGAAVGYL) and 38 to 58 (SLETGVVAAIVIGAIYTIIMV). Zn(2+) is bound at residue histidine 144. Residue glutamate 145 is part of the active site. Histidine 148 contacts Zn(2+). A run of 2 helical transmembrane segments spans residues 159 to 179 (IALALAAAITLLTNIGGNWWF) and 199 to 219 (ILLLVFSILMMVLAPLAAAAI). Glutamate 228 serves as a coordination point for Zn(2+).

It belongs to the peptidase M48B family. The cofactor is Zn(2+).

It localises to the cell membrane. In Leuconostoc mesenteroides subsp. mesenteroides (strain ATCC 8293 / DSM 20343 / BCRC 11652 / CCM 1803 / JCM 6124 / NCDO 523 / NBRC 100496 / NCIMB 8023 / NCTC 12954 / NRRL B-1118 / 37Y), this protein is Protease HtpX homolog.